A 171-amino-acid chain; its full sequence is Shikimate kinase (171 aa).

14–19 (GAGKST) provides a ligand contact to ATP. S18 lines the Mg(2+) pocket. Substrate contacts are provided by D36, R60, and G82. R120 lines the ATP pocket. Residue R139 coordinates substrate. Q156 contacts ATP.

Belongs to the shikimate kinase family. Monomer. Mg(2+) is required as a cofactor.

Its subcellular location is the cytoplasm. It carries out the reaction shikimate + ATP = 3-phosphoshikimate + ADP + H(+). It functions in the pathway metabolic intermediate biosynthesis; chorismate biosynthesis; chorismate from D-erythrose 4-phosphate and phosphoenolpyruvate: step 5/7. In terms of biological role, catalyzes the specific phosphorylation of the 3-hydroxyl group of shikimic acid using ATP as a cosubstrate. In Shewanella denitrificans (strain OS217 / ATCC BAA-1090 / DSM 15013), this protein is Shikimate kinase.